The following is a 349-amino-acid chain: Isopentenyl-diphosphate delta-isomerase (349 aa).

5-6 (RK) lines the substrate pocket. FMN is bound by residues S61, 62–64 (SMT), S92, and N120. 92-94 (SMR) provides a ligand contact to substrate. A substrate-binding site is contributed by Q159. Residue E160 coordinates Mg(2+). FMN-binding positions include K189, T219, 269–271 (GLR), and 290–291 (AR).

Belongs to the IPP isomerase type 2 family. Homooctamer. Dimer of tetramers. FMN serves as cofactor. Requires NADPH as cofactor. It depends on Mg(2+) as a cofactor.

It is found in the cytoplasm. The enzyme catalyses isopentenyl diphosphate = dimethylallyl diphosphate. Functionally, involved in the biosynthesis of isoprenoids. Catalyzes the 1,3-allylic rearrangement of the homoallylic substrate isopentenyl (IPP) to its allylic isomer, dimethylallyl diphosphate (DMAPP). This chain is Isopentenyl-diphosphate delta-isomerase, found in Picrophilus torridus (strain ATCC 700027 / DSM 9790 / JCM 10055 / NBRC 100828 / KAW 2/3).